Here is a 475-residue protein sequence, read N- to C-terminus: MESSSAETNSTGLHLEPQYQPETILAMAILGLTFVLGLPGNGLVLWVAGLKMRRTVNTVWFLHLTVADFVCCLSLPFSMAHLALRGYWPYGEILCKFIPTVIIFNMFASVFLLTAISLDRCLMVLKPIWCQNHRNVRTACIICGCIWLVAFVLCIPVFVYRETFTLENHTICTYNFSPGSFDYLDYAYDRDAWGYGTPDPIVQLPGEMEHRSDPSSFQTQDGPWSVTTTLYSQTSQRPSEDSFHMDSAKLSGQGKYVDVVLPTNLCGLPMEENRTNTLHNAAFLSSDLDVSNATQKCLSTPEPPQDFWDDLSPFTHEYRTPRLLKVITFTRLVVGFLLPMIIMVACYTLIIFRMRRVRVVKSWNKALHLAMVVVTIFLICWAPYHVFGVLILFINPESRVGAALLSWDHVSIALASANSCFNPFLYALLGRDLRKRVRQSMKGILEAAFSEDISKSTSFIQAKAFSEKHSLSTNV.

The Extracellular segment spans residues 1–23; that stretch reads MESSSAETNSTGLHLEPQYQPET. N-linked (GlcNAc...) asparagine glycosylation occurs at N9. The chain crosses the membrane as a helical span at residues 24-46; sequence ILAMAILGLTFVLGLPGNGLVLW. Over 47–57 the chain is Cytoplasmic; the sequence is VAGLKMRRTVN. A helical transmembrane segment spans residues 58–80; that stretch reads TVWFLHLTVADFVCCLSLPFSMA. Residues 81–96 lie on the Extracellular side of the membrane; it reads HLALRGYWPYGEILCK. C95 and C172 form a disulfide bridge. A helical membrane pass occupies residues 97-118; sequence FIPTVIIFNMFASVFLLTAISL. Over 119 to 139 the chain is Cytoplasmic; that stretch reads DRCLMVLKPIWCQNHRNVRTA. A helical transmembrane segment spans residues 140 to 160; that stretch reads CIICGCIWLVAFVLCIPVFVY. Over 161–331 the chain is Extracellular; it reads RETFTLENHT…RLLKVITFTR (171 aa). N168 carries N-linked (GlcNAc...) asparagine glycosylation. Y174 and Y183 each carry sulfotyrosine. N-linked (GlcNAc...) asparagine glycosylation is found at N273 and N292. The helical transmembrane segment at 332 to 351 threads the bilayer; the sequence is LVVGFLLPMIIMVACYTLII. Residues 352-368 are Cytoplasmic-facing; the sequence is FRMRRVRVVKSWNKALH. Residues 369–391 traverse the membrane as a helical segment; sequence LAMVVVTIFLICWAPYHVFGVLI. The Extracellular portion of the chain corresponds to 392–408; the sequence is LFINPESRVGAALLSWD. A helical transmembrane segment spans residues 409–429; it reads HVSIALASANSCFNPFLYALL. Over 430–475 the chain is Cytoplasmic; sequence GRDLRKRVRQSMKGILEAAFSEDISKSTSFIQAKAFSEKHSLSTNV. A Phosphoserine modification is found at S450.

This sequence belongs to the G-protein coupled receptor 1 family. Interacts with VGF-derived peptide TLQP-21. Expressed in the heart, kidney, lung, liver, peritoneal macrophages and spleen.

The protein resides in the cell membrane. In terms of biological role, receptor for the chemotactic and inflammatory peptide anaphylatoxin C3a. This receptor stimulates chemotaxis, granule enzyme release and superoxide anion production. This Cavia porcellus (Guinea pig) protein is C3a anaphylatoxin chemotactic receptor (C3AR1).